Here is a 226-residue protein sequence, read N- to C-terminus: Ribose-5-phosphate isomerase A (226 aa).

Substrate contacts are provided by residues 26 to 29, 82 to 85, and 95 to 98; these read TGST, DGAD, and KGGG. The Proton acceptor role is filled by E104. Position 122 (K122) interacts with substrate.

It belongs to the ribose 5-phosphate isomerase family. As to quaternary structure, homodimer.

It carries out the reaction aldehydo-D-ribose 5-phosphate = D-ribulose 5-phosphate. It participates in carbohydrate degradation; pentose phosphate pathway; D-ribose 5-phosphate from D-ribulose 5-phosphate (non-oxidative stage): step 1/1. Its function is as follows. Catalyzes the reversible conversion of ribose-5-phosphate to ribulose 5-phosphate. This Streptococcus uberis (strain ATCC BAA-854 / 0140J) protein is Ribose-5-phosphate isomerase A.